Consider the following 360-residue polypeptide: MQTLHVELGERRYPIFIGSQLDPKQLLEPYIHGQQVMIVSNVTVAPLYLSHYQEALESLGKTVATCILPDGEKYKDIQHLNLIFDALLEAGFNRDCTVLALGGGVIGDMAGFASACFQRGVYFVQVPTTLLSQVDSSVGGKTGINHPLGKNMLGAFQQPQVVLADMAQLNTLPERELSAGLAEVIKYALLGDEDFLVWLEENMDGLVARDADLLAEAVYRSCAHKARIVANDEKEQGERALLNLGHTFGHAIESYLGYGTWLHGEAVATGMVMAADLSQRLGWISNEDVARTKKIIQRANLPISCPQIPLDDFLGHMAHDKKVLNGQLRLVLLKQLGQAVITKDFDVELMKQAILANQHG.

NAD(+)-binding positions include 70 to 75 (DGEKYK), 104 to 108 (GVIGD), 128 to 129 (TT), Lys141, and Lys150. Zn(2+)-binding residues include Glu183, His246, and His263.

It belongs to the sugar phosphate cyclases superfamily. Dehydroquinate synthase family. Co(2+) serves as cofactor. Requires Zn(2+) as cofactor. It depends on NAD(+) as a cofactor.

The protein localises to the cytoplasm. It carries out the reaction 7-phospho-2-dehydro-3-deoxy-D-arabino-heptonate = 3-dehydroquinate + phosphate. The protein operates within metabolic intermediate biosynthesis; chorismate biosynthesis; chorismate from D-erythrose 4-phosphate and phosphoenolpyruvate: step 2/7. Its function is as follows. Catalyzes the conversion of 3-deoxy-D-arabino-heptulosonate 7-phosphate (DAHP) to dehydroquinate (DHQ). This chain is 3-dehydroquinate synthase, found in Acinetobacter baumannii (strain SDF).